We begin with the raw amino-acid sequence, 182 residues long: Gas vesicle protein H1 (182 aa).

The segment covering 1-11 (MVPDENDDASD) has biased composition (acidic residues). 2 disordered regions span residues 1–21 (MVPD…SGLL) and 65–106 (GRAD…GGTS). A compositionally biased stretch (low complexity) spans 12–21 (DQSSQLSGLL). Residues 92-101 (TTEDSIHVET) are compositionally biased toward basic and acidic residues.

This sequence belongs to the gas vesicle GvpH family. As to quaternary structure, gvpF to GvpM interact with each other in vitro, and may form multi-subunit complex(es). Interacts with GvpC1. Might interact with GvpA1.

The protein resides in the cytoplasm. It is found in the gas vesicle. In terms of biological role, proteins GvpF to GvpM might be involved in nucleating gas vesicle formation. May be important for the stability of gas vesicles. Gas vesicles are hollow, gas filled proteinaceous nanostructures found in several microbial planktonic microorganisms. They allow positioning of halobacteria at the optimal depth for growth in the poorly aerated, shallow brine pools of their habitat. Its function is as follows. Expression of a 9.5 kb p-vac DNA fragment containing 2 divergently transcribed regions (gvpD-gvpE-gvpF-gvpG-gvpH-gvpI-gvpJ-gvpK-gvpL-gvpM and gvpA-gvpC-gvpN-gvpO) allows H.volcanii to produce gas vesicles. A similar region restores gas vesicle production in H.halobium without the p-vac locus, but it still has the c-vac locus. The polypeptide is Gas vesicle protein H1 (gvpH11) (Halobacterium salinarum (strain ATCC 700922 / JCM 11081 / NRC-1) (Halobacterium halobium)).